Consider the following 343-residue polypeptide: Phosphate acyltransferase (343 aa).

Belongs to the PlsX family. In terms of assembly, homodimer. Probably interacts with PlsY.

It is found in the cytoplasm. It catalyses the reaction a fatty acyl-[ACP] + phosphate = an acyl phosphate + holo-[ACP]. It functions in the pathway lipid metabolism; phospholipid metabolism. Its function is as follows. Catalyzes the reversible formation of acyl-phosphate (acyl-PO(4)) from acyl-[acyl-carrier-protein] (acyl-ACP). This enzyme utilizes acyl-ACP as fatty acyl donor, but not acyl-CoA. In Coxiella burnetii (strain Dugway 5J108-111), this protein is Phosphate acyltransferase.